We begin with the raw amino-acid sequence, 114 residues long: Large ribosomal subunit protein uL22 (114 aa).

This sequence belongs to the universal ribosomal protein uL22 family. As to quaternary structure, part of the 50S ribosomal subunit.

Functionally, this protein binds specifically to 23S rRNA; its binding is stimulated by other ribosomal proteins, e.g. L4, L17, and L20. It is important during the early stages of 50S assembly. It makes multiple contacts with different domains of the 23S rRNA in the assembled 50S subunit and ribosome. The globular domain of the protein is located near the polypeptide exit tunnel on the outside of the subunit, while an extended beta-hairpin is found that lines the wall of the exit tunnel in the center of the 70S ribosome. The sequence is that of Large ribosomal subunit protein uL22 from Desulfitobacterium hafniense (strain DSM 10664 / DCB-2).